The following is a 1368-amino-acid chain: Alpha-latrotoxin-Lg1a (1368 aa).

Residues 217-236 (VLYAILYGTQTYVSVMFFLL) are helix H8 is the probable transmembrane region of the tetrameric pore inserted in the target cell membrane. The cysteines at positions 392 and 1044 are disulfide-linked. ANK repeat units lie at residues 469-500 (QGRT…DINQ), 504-533 (KGYT…SVNS), 538-568 (FLQT…NINE), 572-601 (DGFT…DVNV), 605-635 (KGLT…DINA), 639-669 (NNMT…NANA), 674-704 (GLLS…NYNL), 708-737 (GDIT…NINQ), 741-770 (EKYT…NLEA), 774-803 (TGAT…NWRE), 807-837 (NGQM…VLDI), 841-870 (NLDT…KVNT), 874-903 (KGQA…NVYI), 907-936 (DGLN…KFEW), 953-981 (ISHF…GHYS), 982-1011 (ICSP…SVDG), 1013-1042 (KPDT…KVNH), 1046-1075 (NGMT…DFRR), 1079-1109 (LDAT…NINI), and 1115-1144 (NKET…DENI). Residues 1174-1177 (KFRR) form a furin-like endopeptidase recognition region region. A propeptide spanning residues 1178–1368 (EYKSSNGEHD…GETLHLFHES (191 aa)) is cleaved from the precursor.

It belongs to the cationic peptide 01 (latrotoxin) family. 03 (alpha-latrotoxin) subfamily. In terms of assembly, homotetramer in membranes. In terms of tissue distribution, expressed in venom gland, cephalothorax, and abdomen tissues from both males and females.

Its subcellular location is the secreted. It localises to the target cell membrane. Presynaptic neurotoxin that causes massive release of neurotransmitters from vertebrate (but not invertebrate) nerve terminals and endocrine cells via a complex mechanism involving activation of receptor(s) and toxin insertion into the plasma membrane with subsequent pore formation. Binds to neurexin-1-alpha (NRXN1) in a calcium dependent manner, adhesion G protein-coupled receptor L1 (ADGRL1, also termed latrophilin-1 and calcium-independent receptor of latrotoxin (CIRL)), and receptor-type tyrosine-protein phosphatase S (PTPRS), also termed PTP sigma. NRXN1 and PTPRS are suggested to provide a platform for binding and subsequent pore formation events. In contrast, binding to ADGRL1 does not involve oligomerization and channel formation, but direct downstream stimulation of the synaptic fusion machinery. In Latrodectus geometricus (Brown widow spider), this protein is Alpha-latrotoxin-Lg1a.